Here is a 215-residue protein sequence, read N- to C-terminus: Ribosomal RNA small subunit methyltransferase G (215 aa).

S-adenosyl-L-methionine-binding positions include G77, F82, 130 to 131, and R146; that span reads IE.

The protein belongs to the methyltransferase superfamily. RNA methyltransferase RsmG family.

It is found in the cytoplasm. It carries out the reaction guanosine(527) in 16S rRNA + S-adenosyl-L-methionine = N(7)-methylguanosine(527) in 16S rRNA + S-adenosyl-L-homocysteine. Functionally, specifically methylates the N7 position of guanine in position 527 of 16S rRNA. This chain is Ribosomal RNA small subunit methyltransferase G, found in Bartonella bacilliformis (strain ATCC 35685 / KC583 / Herrer 020/F12,63).